We begin with the raw amino-acid sequence, 103 residues long: Large ribosomal subunit protein bL21 (103 aa).

It belongs to the bacterial ribosomal protein bL21 family. In terms of assembly, part of the 50S ribosomal subunit. Contacts protein L20.

This protein binds to 23S rRNA in the presence of protein L20. The polypeptide is Large ribosomal subunit protein bL21 (Tolumonas auensis (strain DSM 9187 / NBRC 110442 / TA 4)).